Reading from the N-terminus, the 308-residue chain is Putative T-box protein 30/42 (308 aa).

Residues 11–192 (MSNEELWKER…KHSTFGNRSE (182 aa)) constitute a DNA-binding region (T-box). The tract at residues 186-220 (TFGNRSEGGIKRKTSDAAGQLPSKRSSKKPVKKDV) is disordered.

It localises to the nucleus. In terms of biological role, involved in the regulatory network to control embryonic patterning and morphogenesis. Implicated in negatively regulating vab-7 expression at the anterior of embryos. This Caenorhabditis elegans protein is Putative T-box protein 30/42 (tbx-30).